The chain runs to 283 residues: Cyclin-C (283 aa).

The 99-residue stretch at 46–144 folds into the Cyclin N-terminal domain; that stretch reads NVIQALGEHL…ILECEFYLLE (99 aa). Residues 252–283 are disordered; sequence TILSKMPKPKPPPNSEGEQGPNGSQNSSYSQS. Polar residues predominate over residues 272–283; the sequence is PNGSQNSSYSQS. At Ser275 the chain carries Phosphoserine.

Belongs to the cyclin family. Cyclin C subfamily. As to quaternary structure, component of the Mediator complex, which is composed of MED1, MED4, MED6, MED7, MED8, MED9, MED10, MED11, MED12, MED13, MED13L, MED14, MED15, MED16, MED17, MED18, MED19, MED20, MED21, MED22, MED23, MED24, MED25, MED26, MED27, MED29, MED30, MED31, CCNC, CDK8 and CDC2L6/CDK11. The MED12, MED13, CCNC and CDK8 subunits form a distinct module termed the CDK8 module. Mediator containing the CDK8 module is less active than Mediator lacking this module in supporting transcriptional activation. Individual preparations of the Mediator complex lacking one or more distinct subunits have been variously termed ARC, CRSP, DRIP, PC2, SMCC and TRAP. The cylin/CDK pair formed by CCNC/CDK8 also associates with the large subunit of RNA polymerase II. Highest levels in pancreas. High levels in heart, liver, skeletal muscle and kidney. Low levels in brain.

Its subcellular location is the nucleus. Its function is as follows. Component of the Mediator complex, a coactivator involved in regulated gene transcription of nearly all RNA polymerase II-dependent genes. Mediator functions as a bridge to convey information from gene-specific regulatory proteins to the basal RNA polymerase II transcription machinery. Mediator is recruited to promoters by direct interactions with regulatory proteins and serves as a scaffold for the assembly of a functional preinitiation complex with RNA polymerase II and the general transcription factors. Binds to and activates cyclin-dependent kinase CDK8 that phosphorylates the CTD (C-terminal domain) of the large subunit of RNA polymerase II (RNAp II), which may inhibit the formation of a transcription initiation complex. The polypeptide is Cyclin-C (CCNC) (Homo sapiens (Human)).